The primary structure comprises 285 residues: HTH-type transcriptional regulator HexR (285 aa).

An HTH rpiR-type domain is found at 2–78; that stretch reads KNLLEQIQSR…IQLAQSLASG (77 aa). The H-T-H motif DNA-binding region spans 38–57; that stretch reads IAALAQAAAVSEPTVNRFCR. The SIS domain occupies 122 to 261; the sequence is AVDLLIQARQ…ATGVTLRRGV (140 aa).

Involved in regulation of glucose metabolism. Transcriptional repressor of the gap-1 gene and of the edd-glk-gltR-2 and zwf-pgl-eda operons. Acts by binding directly to an inverted pseudopalindromic sequence in the promoter region. The protein is HTH-type transcriptional regulator HexR of Pseudomonas aeruginosa (strain ATCC 15692 / DSM 22644 / CIP 104116 / JCM 14847 / LMG 12228 / 1C / PRS 101 / PAO1).